Here is a 95-residue protein sequence, read N- to C-terminus: PIK3R3 upstream open reading frame protein (95 aa).

The tract at residues 1–27 (MGPSRLVRGPRPQGMRSPYRRPGMGWP) is disordered.

This Homo sapiens (Human) protein is PIK3R3 upstream open reading frame protein.